A 480-amino-acid chain; its full sequence is Aspartyl/glutamyl-tRNA(Asn/Gln) amidotransferase subunit B (480 aa).

Belongs to the GatB/GatE family. GatB subfamily. In terms of assembly, heterotrimer of A, B and C subunits.

It catalyses the reaction L-glutamyl-tRNA(Gln) + L-glutamine + ATP + H2O = L-glutaminyl-tRNA(Gln) + L-glutamate + ADP + phosphate + H(+). The catalysed reaction is L-aspartyl-tRNA(Asn) + L-glutamine + ATP + H2O = L-asparaginyl-tRNA(Asn) + L-glutamate + ADP + phosphate + 2 H(+). Its function is as follows. Allows the formation of correctly charged Asn-tRNA(Asn) or Gln-tRNA(Gln) through the transamidation of misacylated Asp-tRNA(Asn) or Glu-tRNA(Gln) in organisms which lack either or both of asparaginyl-tRNA or glutaminyl-tRNA synthetases. The reaction takes place in the presence of glutamine and ATP through an activated phospho-Asp-tRNA(Asn) or phospho-Glu-tRNA(Gln). This is Aspartyl/glutamyl-tRNA(Asn/Gln) amidotransferase subunit B from Streptococcus agalactiae serotype III (strain NEM316).